The sequence spans 343 residues: N-acetyl-gamma-glutamyl-phosphate reductase (343 aa).

Residue C147 is part of the active site.

The protein belongs to the NAGSA dehydrogenase family. Type 1 subfamily.

It is found in the cytoplasm. It carries out the reaction N-acetyl-L-glutamate 5-semialdehyde + phosphate + NADP(+) = N-acetyl-L-glutamyl 5-phosphate + NADPH + H(+). Its pathway is amino-acid biosynthesis; L-arginine biosynthesis; N(2)-acetyl-L-ornithine from L-glutamate: step 3/4. Its function is as follows. Catalyzes the NADPH-dependent reduction of N-acetyl-5-glutamyl phosphate to yield N-acetyl-L-glutamate 5-semialdehyde. The polypeptide is N-acetyl-gamma-glutamyl-phosphate reductase (Staphylococcus saprophyticus subsp. saprophyticus (strain ATCC 15305 / DSM 20229 / NCIMB 8711 / NCTC 7292 / S-41)).